Consider the following 215-residue polypeptide: Thiamine-phosphate synthase (215 aa).

Residues 37 to 41 (QLRIK) and asparagine 69 each bind 4-amino-2-methyl-5-(diphosphooxymethyl)pyrimidine. Residues aspartate 70 and aspartate 89 each contribute to the Mg(2+) site. Serine 108 contacts 4-amino-2-methyl-5-(diphosphooxymethyl)pyrimidine. 134–136 (TQT) contacts 2-[(2R,5Z)-2-carboxy-4-methylthiazol-5(2H)-ylidene]ethyl phosphate. A 4-amino-2-methyl-5-(diphosphooxymethyl)pyrimidine-binding site is contributed by lysine 137. 2-[(2R,5Z)-2-carboxy-4-methylthiazol-5(2H)-ylidene]ethyl phosphate-binding positions include glycine 166 and 186–187 (VS).

The protein belongs to the thiamine-phosphate synthase family. Mg(2+) serves as cofactor.

The catalysed reaction is 2-[(2R,5Z)-2-carboxy-4-methylthiazol-5(2H)-ylidene]ethyl phosphate + 4-amino-2-methyl-5-(diphosphooxymethyl)pyrimidine + 2 H(+) = thiamine phosphate + CO2 + diphosphate. It carries out the reaction 2-(2-carboxy-4-methylthiazol-5-yl)ethyl phosphate + 4-amino-2-methyl-5-(diphosphooxymethyl)pyrimidine + 2 H(+) = thiamine phosphate + CO2 + diphosphate. It catalyses the reaction 4-methyl-5-(2-phosphooxyethyl)-thiazole + 4-amino-2-methyl-5-(diphosphooxymethyl)pyrimidine + H(+) = thiamine phosphate + diphosphate. Its pathway is cofactor biosynthesis; thiamine diphosphate biosynthesis; thiamine phosphate from 4-amino-2-methyl-5-diphosphomethylpyrimidine and 4-methyl-5-(2-phosphoethyl)-thiazole: step 1/1. Its function is as follows. Condenses 4-methyl-5-(beta-hydroxyethyl)thiazole monophosphate (THZ-P) and 2-methyl-4-amino-5-hydroxymethyl pyrimidine pyrophosphate (HMP-PP) to form thiamine monophosphate (TMP). This chain is Thiamine-phosphate synthase, found in Yersinia pseudotuberculosis serotype I (strain IP32953).